The following is a 99-amino-acid chain: uncharacterized protein (99 aa).

The chain crosses the membrane as a helical span at residues 74–90 (FLSLPLGHSYLFLFCFW).

The protein resides in the membrane. This is an uncharacterized protein from Saccharomyces cerevisiae (strain ATCC 204508 / S288c) (Baker's yeast).